Here is a 324-residue protein sequence, read N- to C-terminus: Clavaminate synthase 1 (324 aa).

3 residues coordinate Fe cation: His-144, Glu-146, and His-279. Position 293 (Arg-293) interacts with 2-oxoglutarate.

This sequence belongs to the clavaminate synthase family. Fe(2+) is required as a cofactor.

The enzyme catalyses deoxyamidinoproclavaminate + 2-oxoglutarate + O2 = amidinoproclavaminate + succinate + CO2. It catalyses the reaction proclavaminate + 2-oxoglutarate + O2 = dihydroclavaminate + succinate + CO2 + H2O. It carries out the reaction dihydroclavaminate + 2-oxoglutarate + O2 = clavaminate + succinate + CO2 + H2O. Its pathway is antibiotic biosynthesis; clavulanate biosynthesis; clavulanate from D-glyceraldehyde 3-phosphate and L-arginine: step 3/8. It participates in antibiotic biosynthesis; clavulanate biosynthesis; clavulanate from D-glyceraldehyde 3-phosphate and L-arginine: step 5/8. It functions in the pathway antibiotic biosynthesis; clavulanate biosynthesis; clavulanate from D-glyceraldehyde 3-phosphate and L-arginine: step 6/8. The protein is Clavaminate synthase 1 (cs1) of Streptomyces clavuligerus.